Reading from the N-terminus, the 180-residue chain is Ferric nitrobindin-like protein (180 aa).

The short motif at 21–27 is the GXWXGXG element; that stretch reads GRWEGAG.

This sequence belongs to the nitrobindin family.

The chain is Ferric nitrobindin-like protein from Kineococcus radiotolerans (strain ATCC BAA-149 / DSM 14245 / SRS30216).